We begin with the raw amino-acid sequence, 492 residues long: Glutamate--cysteine ligase A, chloroplastic (492 aa).

A disulfide bond links cysteine 156 and cysteine 376.

This sequence belongs to the carboxylate-amine ligase family. Glutamate--cysteine ligase type 2 subfamily. Homodimer or monomer when oxidized or reduced, respectively. The Cys-156-Cys-376 disulfide bridge is known to modulate the enzyme activity according to the redox status. The oxidized form constitutes the active enzyme.

Its subcellular location is the plastid. It is found in the chloroplast. It catalyses the reaction L-cysteine + L-glutamate + ATP = gamma-L-glutamyl-L-cysteine + ADP + phosphate + H(+). The protein operates within sulfur metabolism; glutathione biosynthesis; glutathione from L-cysteine and L-glutamate: step 1/2. This is Glutamate--cysteine ligase A, chloroplastic (GSH1-1) from Oryza sativa subsp. indica (Rice).